A 358-amino-acid polypeptide reads, in one-letter code: Tripartite motif-containing protein 54 (358 aa).

An RING-type zinc finger spans residues 26–82 (CPICLEMFSKPVVILPCQHNLCRKCANDVFQASNPLWQSRGSTTVSSGGRFRCPSCR). A B box-type zinc finger spans residues 121–163 (EQHLMCEEHEEEKINIYCLSCEVPTCSLCKVFGAHKDCEVAPL). The Zn(2+) site is built by Cys-126, His-129, Cys-149, and His-155. A mediates microtubule-binding and homooligomerization region spans residues 168–211 (KRQKSELSDGIAMLVAGNDRVQAVITQMEEVCQTIEDNSRRQKQ). A coiled-coil region spans residues 220-258 (LCAVLEERKGELLQALAREQEEKLQRVRGLIRQYGDHLE). One can recognise a COS domain in the interval 271-329 (MEEPQMALYLQQAKELINKVGAMSKVELAGRPEPGYESMEQFTVRVEHVAEMLRTIDFQ). A disordered region spans residues 326-358 (IDFQPGASGEEEEVAPDGEEGSAGPEEERPDGP). Residues 334 to 345 (GEEEEVAPDGEE) show a composition bias toward acidic residues.

As to quaternary structure, homooligomer and heterooligomer. Interacts with tubulin. Interacts with TRIM63 and probably with TRIM55. In terms of tissue distribution, specifically expressed in heart and skeletal muscle.

It localises to the cytoplasm. The protein localises to the cytoskeleton. The protein resides in the myofibril. It is found in the sarcomere. Its subcellular location is the z line. Its function is as follows. May bind and stabilize microtubules during myotubes formation. This chain is Tripartite motif-containing protein 54 (TRIM54), found in Homo sapiens (Human).